Consider the following 694-residue polypeptide: Acetolactate synthase catalytic subunit, mitochondrial (694 aa).

A mitochondrion-targeting transit peptide spans 1-42 (MLRSRQATNALRAVGQTRPLRSQTAVAFTQSLNKVPSNRRSE). Low complexity predominate over residues 45 to 58 (VATASSTASGAFNS). The segment at 45–69 (VATASSTASGAFNSQVRPTPSPTFN) is disordered. Residues 59–69 (QVRPTPSPTFN) show a composition bias toward polar residues. E140 is a binding site for thiamine diphosphate. FAD-binding positions include R242, 358–379 (HGSAYANMAMQEADLIIALGGR), and 410–429 (EIMPKNINKVVEATEAIVGD). Residues 505 to 585 (QHQMWTAQHF…VKVIVLNNEE (81 aa)) form a thiamine pyrophosphate binding region. Mg(2+) is bound by residues D556, N583, and E585.

The protein belongs to the TPP enzyme family. In terms of assembly, homodimer. It depends on Mg(2+) as a cofactor. The cofactor is thiamine diphosphate.

The protein localises to the mitochondrion. It carries out the reaction 2 pyruvate + H(+) = (2S)-2-acetolactate + CO2. The enzyme catalyses 2-oxobutanoate + pyruvate + H(+) = (S)-2-ethyl-2-hydroxy-3-oxobutanoate + CO2. Its pathway is amino-acid biosynthesis; L-isoleucine biosynthesis; L-isoleucine from 2-oxobutanoate: step 1/4. The protein operates within amino-acid biosynthesis; L-valine biosynthesis; L-valine from pyruvate: step 1/4. Functionally, acetolactate synthase catalytic subunit, mitochondrial; part of the gene cluster that mediates the biosynthesis of chlorflavonin, a fungal flavonoid with acetolactate synthase inhibitory activity. Is not direcly involved in chlorflavonin biosynthesis but acts as a self-resistant protein that effectively confers chlorflavonin resistance to the native host. As a catalytic subunit of mitochondrial acetolactate synthase, catalyzes the first of a series of common steps in the biosynthesis of the branched-chain amino acids. Catalyzes the irreversible decarboxylation of pyruvate to a bound hydroxyethyl group that then condenses with either a second pyruvate molecule to form 2-acetolactate (AL) or with 2-ketobutyrate to form 2-aceto-2-hydroxybutyrate (AHB). The first product is the precursor for valine and leucine biosynthesis, while the second leads to isoleucine. This chain is Acetolactate synthase catalytic subunit, mitochondrial, found in Aspergillus candidus.